A 94-amino-acid polypeptide reads, in one-letter code: Small ribosomal subunit protein uS19 (94 aa).

This sequence belongs to the universal ribosomal protein uS19 family.

Protein S19 forms a complex with S13 that binds strongly to the 16S ribosomal RNA. This is Small ribosomal subunit protein uS19 from Syntrophomonas wolfei subsp. wolfei (strain DSM 2245B / Goettingen).